Here is a 318-residue protein sequence, read N- to C-terminus: D-alanine--D-alanine ligase (318 aa).

Residues 116 to 315 enclose the ATP-grasp domain; it reads KQVWQSLGLP…FEQLSLAVLA (200 aa). 146-201 is an ATP binding site; it reads MSRLGDLVMVKPAQEGSSIGMAKVSNAQQLAAAIQQAFEYDDKVLLEQFIQGSEYT. Residues Asp269, Glu282, and Asn284 each contribute to the Mg(2+) site.

This sequence belongs to the D-alanine--D-alanine ligase family. Mg(2+) is required as a cofactor. The cofactor is Mn(2+).

It is found in the cytoplasm. It catalyses the reaction 2 D-alanine + ATP = D-alanyl-D-alanine + ADP + phosphate + H(+). It functions in the pathway cell wall biogenesis; peptidoglycan biosynthesis. Functionally, cell wall formation. This is D-alanine--D-alanine ligase from Pseudoalteromonas atlantica (strain T6c / ATCC BAA-1087).